The primary structure comprises 396 residues: Acetate kinase (396 aa).

A Mg(2+)-binding site is contributed by Asn7. Lys14 contributes to the ATP binding site. Arg88 is a substrate binding site. Catalysis depends on Asp145, which acts as the Proton donor/acceptor. Residues 205-209, 279-281, and 327-331 contribute to the ATP site; these read HLGNG, DFR, and GIGEN. A Mg(2+)-binding site is contributed by Glu381.

Belongs to the acetokinase family. In terms of assembly, homodimer. The cofactor is Mg(2+). Mn(2+) serves as cofactor.

It is found in the cytoplasm. It carries out the reaction acetate + ATP = acetyl phosphate + ADP. It participates in metabolic intermediate biosynthesis; acetyl-CoA biosynthesis; acetyl-CoA from acetate: step 1/2. Catalyzes the formation of acetyl phosphate from acetate and ATP. Can also catalyze the reverse reaction. In Campylobacter jejuni subsp. doylei (strain ATCC BAA-1458 / RM4099 / 269.97), this protein is Acetate kinase.